The primary structure comprises 2731 residues: MMNPQQILQQQQQMIQQQQQQLHQQQMQQQQMQQQQQHHMQQQQPMQHMQQPHHMIHQQQPIIIQQHLHHQIHPHIQQQQQQQQQQQQQQQQQQQQQQQQQQQQQQVHPSHLQQQVHHPQLHMQQHIPQHMQQHHIMQQHQQIHQMQMQQQQQQQQQQQQQQQQQQQQQQQQQQQQQQQQQQQHQQQQQPIQQQHIVQQQPIQQQPIQQHIVQQPIQQQIQQQPQIQQQQIPQPQIQIPSQIQQPLQQQQIQQQQIPLPQQVPLAQTQQQQTAPIQQLQQQQQLQQQQQQQQQQQQQQQQQQQQPQQVQQPQQQQQQQQPVARRPIQNPSYHSQSQIGHPMRGGGLKKYEIQKPADKKELGPDLGVPDFYPLDDKSKEDTLPQEFILGGFCERYQHDECKSSSSIFKNFDFPKVKEQLLQSIYQVEWKKSSTQKSGQPPVMNKSGNKRPVPEQKAWSANHRESWVLKLAGNEPLQKLASSVPHGYKGETLLKMFLDNQVPLIRATWYTKIVYGNMPKHKTVEPSNDWTKTIVQSLFALIRNTTGENNSSGSSSSNNVLGGNSGSGVVKKATSSYTGILYIERLIKWNFSEGLLNKDILLSMLIDHLNETDRPEEAVLISSLLLYYSDTLILSTYHSMKFLNKAYEKLMKITISSAAAVSAASSSSSSSSTQSNITALSNPKLQQLGHGHGHGHGHHSHSHSHNQQQPQLNITSTQTIPSINSIASSLSPSNQKIYSILCIISKQISMNLPDTFMSFKFFRELVSLIWPSNLIDRIEYNQLSFVNNLRFTVSPEYKWINKYYSEINKNQQTQLKQLRQQQNNNIGFKNNKNNNSIINKQNNITNNNNNNNNNSRGGINYSNLIKSLDRFYTTFDLKLLYHEIFGNGNQVSLEDDKEKILLVCEWACTSCRNYPFSFLSATSILKIFERNLTIKLNNIVLNHPLQNILVHFLETFKPKNIELKRICQLFSELIRNEIFSQNSYARYLISRGILENSNININGNHNGDKNNNINGRLENNKYHKYYLKEFPIFNRNDFPSYDIHQQRNQRRTILFPNTIKSQEEINSMEQARISVKSFILNSANSNNENDNNSDMMVDGGGGGGGGDKQNIGLIQLSQIIQSLSFYSQISLTEWLSLCLRLNFNNPSNDDNNNNNNNNNNHHQLSDYSMKGFRHFSFPITQFYIERVFIIMESVSNYHSILQCLLVLWDNWNNIKELQSFVFYTTKRLQQAFIVSDQFISLLDIIYKKVINLSRNNNNNNKNKNNNKQSNNIKKEGTNGEEQESDDDDDDDEDDDDDDNDENDKVNDNDNEEDDEEDDEDEDEDEDDQMDETKDSIKQQQQQKSNENYIESYLYDILNKFKSIKSVQIWIKRNNVQCKLKKELSNDKNMIDKSELKNSCDFMIDQVLSIKNQLKQEQEQQNCEIINNIIKRFDEELISNNLINSLMNQFKTKVSNILLGCENGGSGGGGGGGNLSDQDICEEFMKSLISKTIDDNKNNDNNNNNENENNNIISKTIIIIKQQMVLSRLLCLFSIVYPISMNGKQLFLRLFKDQLSIILKTFINSNDSMEIQEKYFFKVILLLVTLILNQYIDLYSIMVYSILPLLQSNEIESDEDCKVWFLIKIIQVLLCDGKLIQFVYKDIFIDNNNNNHQSNQGGGGDSGNNNLTNLKTIINHQVISLNLTNKSKISSLSEIFQTICKLYHQYHEKIKDTIDDDNNNNNSKNELSTSIFQGICTILTDPDSRYIFLNSSQIDKIKQLGLGPIETRYLFHLILGNLKNDHDDNNENNNNNNNNNNNNNNNNNNNNNNNNNNNNNNNNNNNNNNNNNGFNFKINNSRIIIQYEQLKLENCITYSFKVINSTLTNSSNCYWNIHLSYIGLKLLLDEWKTLPPIISTQSSTTSPLTKSPSQSPTLQSQDLNSTNSTSPTSKQSQQQQQQQQQKSTTPTLTPATTTTTTTNNTTTFTPESIITQFILLHFEENRGWERVFIYEDLFLLFPLEVRNELIKISTIILESQYKETSFIQPSTDLPLIKHIQQNLPISQLLKQQPQQYQLILNRESSGTNKAVLINDDNLDNILFQESFTDIIINILSTYEDSNPISNSFILSLFKQLSMFNQFSKGGVLDTINLDSTLSEIVIQSVVIRITFLITQIKNCKLIVKQSTQKLEEISVTLLNLLSKFIIQSDGEFNLFDPILTIFDLILSDKFGNDNILNYSSSSSSTTTTSTTSTPVTSSPSTTTTATTNQQQQQQQQQQADQKNNVKKKLHELYQKIKSSFPTSLQLKLEKQLSFLSTNPTSLPFTIIHPPTLVNTSSVSSTNTSIQSTTSPIIAPVTPPSNFNLQQQTSQQQQQQQQQQQQQSQQHQQQQQTPQQQQQSQQQQQQQQQQTATTASTASQIPPQAVSSILDIKPTYTQMDPWTLLEDYSETPLSPSIYGGVKMERKELTYIKSSFPSKNMALVNEPVDQKLLAQRKSQVQEIEKQQQQQQIKSQPSTPLTSLPPQQHQQLQPPPPQLQQQLNQQQQRQQPPQQLQQQKPQTQQQQQQQQQQQQQQQQQQQQQQTQKQPQQPQQPQQSQQFQQYQQFEQQQQALQFHLNQQKMQQLQPQQLNQQQLNQQQLNQQLNQQQQLNQQQFQLHQQQQQQLKQQQLQQQQLQQQIQQQQQQQQLQQLIQPQQFQQQNLKRNFNNLSQPPLPQQQQQQQIHLQQQQIPQQHQQIPQQQQHQQHQQQKCSTTKYNNYK.

Coiled coils occupy residues 5 to 37 (QQIL…QQQQ), 75 to 108 (HIQQ…QQVH), 141 to 189 (QQIH…QQQQ), and 275 to 304 (IQQL…QQQQ). 2 disordered regions span residues 29-57 (QQQM…HMIH) and 101-145 (QQQQ…QIHQ). Over residues 310–320 (QPQQQQQQQQP) the composition is skewed to low complexity. Disordered regions lie at residues 310-376 (QPQQ…DDKS), 432-451 (TQKS…RPVP), 685-708 (LGHG…QQPQ), and 1251-1341 (RNNN…QQKS). A compositionally biased stretch (polar residues) spans 327-337 (QNPSYHSQSQI). Basic and acidic residues predominate over residues 347 to 361 (KKYEIQKPADKKELG). The segment covering 688–701 (GHGHGHGHHSHSHS) has biased composition (basic residues). Over residues 1251-1268 (RNNNNNNKNKNNNKQSNN) the composition is skewed to low complexity. Acidic residues-rich tracts occupy residues 1275 to 1298 (NGEE…DNDE) and 1305 to 1326 (NDNE…DDQM). Coiled-coil stretches lie at residues 1316–1344 (EDED…SNEN) and 1375–1433 (KLKK…DEEL). Disordered regions lie at residues 1778 to 1825 (HDDN…NNNG), 1892 to 1958 (TQSS…NNTT), 2212 to 2258 (SSSS…NNVK), 2307 to 2351 (TSSV…QQQQ), 2472 to 2532 (EIEK…KPQT), and 2705 to 2731 (HQQI…NNYK). 9 stretches are compositionally biased toward low complexity: residues 1783-1824 (ENNN…NNNN), 1892-1909 (TQSS…QSPT), 1916-1958 (NSTN…NNTT), 2212-2250 (SSSS…QQQQ), 2307-2322 (TSSV…STTS), 2337-2351 (QQQT…QQQQ), 2472-2501 (EIEK…HQQL), 2508-2532 (LQQQ…KPQT), and 2705-2720 (HQQI…HQQQ). Residues 2239–2270 (TNQQQQQQQQQQADQKNNVKKKLHELYQKIKS) are a coiled coil. A coiled-coil region spans residues 2336–2363 (LQQQTSQQQQQQQQQQQQQSQQHQQQQQ). Residues 2523 to 2662 (QQLQQQKPQT…QQQQQQLQQL (140 aa)) are a coiled coil. Residues 2721–2731 (KCSTTKYNNYK) are compositionally biased toward polar residues.

It belongs to the Mediator complex subunit 12 family. As to quaternary structure, component of the Mediator complex.

Its subcellular location is the nucleus. In terms of biological role, component of the Mediator complex, a coactivator involved in the regulated transcription of nearly all RNA polymerase II-dependent genes. Mediator functions as a bridge to convey information from gene-specific regulatory proteins to the basal RNA polymerase II transcription machinery. Mediator is recruited to promoters by direct interactions with regulatory proteins and serves as a scaffold for the assembly of a functional preinitiation complex with RNA polymerase II and the general transcription factors. The chain is Putative mediator of RNA polymerase II transcription subunit 12 (med12) from Dictyostelium discoideum (Social amoeba).